A 214-amino-acid chain; its full sequence is uncharacterized protein (214 aa).

The next 5 helical transmembrane spans lie at 33 to 53 (VILFVSLVFILSLVLLYILVV), 104 to 124 (ILGIFSLFVIAVNSYILSYVL), 132 to 152 (FIYLVLPHGIIEIPALILSAS), 153 to 173 (GGVLFNMGLVNFLINIKFGTK), and 186 to 206 (LLILSIILFIVAGIVEGTITF).

It localises to the cell membrane. This is an uncharacterized protein from Methanocaldococcus jannaschii (strain ATCC 43067 / DSM 2661 / JAL-1 / JCM 10045 / NBRC 100440) (Methanococcus jannaschii).